The chain runs to 206 residues: Ribosomal RNA large subunit methyltransferase E (206 aa).

S-adenosyl-L-methionine is bound by residues Gly61, Trp63, Asp81, Asp97, and Asp122. Lys162 acts as the Proton acceptor in catalysis.

It belongs to the class I-like SAM-binding methyltransferase superfamily. RNA methyltransferase RlmE family.

The protein resides in the cytoplasm. It catalyses the reaction uridine(2552) in 23S rRNA + S-adenosyl-L-methionine = 2'-O-methyluridine(2552) in 23S rRNA + S-adenosyl-L-homocysteine + H(+). Its function is as follows. Specifically methylates the uridine in position 2552 of 23S rRNA at the 2'-O position of the ribose in the fully assembled 50S ribosomal subunit. The protein is Ribosomal RNA large subunit methyltransferase E of Neisseria meningitidis serogroup C (strain 053442).